Reading from the N-terminus, the 500-residue chain is NAD(P)H-quinone oxidoreductase chain 4, chloroplastic (500 aa).

15 helical membrane passes run 4–24 (FPWL…LFFF), 37–57 (ICIC…HFEL), 87–107 (IGPI…AWPV), 113–130 (LFYF…GSFS), 134–154 (LLLF…LLSM), 167–187 (FILY…GIGL), 207–227 (IALE…KSPI), 242–262 (HYST…YGLV), 272–292 (AHSI…IYAA), 305–325 (IAYS…SISD), 330–350 (GAIL…FLAG), 364–384 (MGGL…LSMA), 386–406 (LALP…GIIT), 417–437 (VITL…LSML), and 463–483 (FVAI…DFVF).

It belongs to the complex I subunit 4 family.

It is found in the plastid. The protein localises to the chloroplast thylakoid membrane. It carries out the reaction a plastoquinone + NADH + (n+1) H(+)(in) = a plastoquinol + NAD(+) + n H(+)(out). The enzyme catalyses a plastoquinone + NADPH + (n+1) H(+)(in) = a plastoquinol + NADP(+) + n H(+)(out). The protein is NAD(P)H-quinone oxidoreductase chain 4, chloroplastic of Cucumis sativus (Cucumber).